The primary structure comprises 161 residues: Allophycocyanin beta chain (161 aa).

Asparagine 71 carries the post-translational modification N4-methylasparagine. Cysteine 81 serves as a coordination point for (2R,3E)-phycocyanobilin.

This sequence belongs to the phycobiliprotein family. As to quaternary structure, heterodimer of an alpha and a beta chain. Post-translationally, contains one covalently linked phycocyanobilin chromophore.

The protein resides in the plastid. It localises to the cyanelle thylakoid membrane. Functionally, light-harvesting photosynthetic bile pigment-protein from the phycobiliprotein complex. Allophycocyanin has a maximum absorption at approximately 650 nanometers. The protein is Allophycocyanin beta chain (apcB) of Cyanophora paradoxa.